The chain runs to 299 residues: Porphobilinogen deaminase (299 aa).

Cys-234 is modified (S-(dipyrrolylmethanemethyl)cysteine).

This sequence belongs to the HMBS family. Monomer. It depends on dipyrromethane as a cofactor.

It carries out the reaction 4 porphobilinogen + H2O = hydroxymethylbilane + 4 NH4(+). The protein operates within porphyrin-containing compound metabolism; protoporphyrin-IX biosynthesis; coproporphyrinogen-III from 5-aminolevulinate: step 2/4. In terms of biological role, tetrapolymerization of the monopyrrole PBG into the hydroxymethylbilane pre-uroporphyrinogen in several discrete steps. This chain is Porphobilinogen deaminase, found in Corynebacterium efficiens (strain DSM 44549 / YS-314 / AJ 12310 / JCM 11189 / NBRC 100395).